The sequence spans 261 residues: Cytochrome c oxidase subunit 3 (261 aa).

At 1–15 (MAHQAHAYHMVDPSP) the chain is on the mitochondrial matrix side. Residues 16 to 34 (WPLTGAVAALLMSSGLAIW) form a helical membrane-spanning segment. Residues 35-40 (FHLHSM) are Mitochondrial intermembrane-facing. Residues 41–66 (TLIVLGMILLILTMIQWWRDIIREGT) traverse the membrane as a helical segment. Residues 67 to 72 (FQGHHT) lie on the Mitochondrial matrix side of the membrane. The helical transmembrane segment at 73-105 (PPVQKGLRYGMILFITSEVFFFLGFFWAFYHSS) threads the bilayer. The Mitochondrial intermembrane portion of the chain corresponds to 106-128 (LAPTPELGGCWPPTGLTTLDPFE). The chain crosses the membrane as a helical span at residues 129 to 152 (VPLLNTAVLLASGVTVTWAHHSLM). The Mitochondrial matrix segment spans residues 153 to 155 (EGE). A helical transmembrane segment spans residues 156-183 (RKQAIQSLALTILLGLYFTALQAMEYYE). Residues 184–190 (APFTIAD) lie on the Mitochondrial intermembrane side of the membrane. Residues 191–223 (GVYGSTFFVATGFHGLHVIIGSTFLAVCLLRQV) traverse the membrane as a helical segment. At 224–232 (LFHFTSDHH) the chain is on the mitochondrial matrix side. A helical transmembrane segment spans residues 233–256 (FGFEAAAWYWHFVDVVWLFLYVSI). The Mitochondrial intermembrane segment spans residues 257-261 (YWWGS).

Belongs to the cytochrome c oxidase subunit 3 family. Component of the cytochrome c oxidase (complex IV, CIV), a multisubunit enzyme composed of 14 subunits. The complex is composed of a catalytic core of 3 subunits MT-CO1, MT-CO2 and MT-CO3, encoded in the mitochondrial DNA, and 11 supernumerary subunits COX4I, COX5A, COX5B, COX6A, COX6B, COX6C, COX7A, COX7B, COX7C, COX8 and NDUFA4, which are encoded in the nuclear genome. The complex exists as a monomer or a dimer and forms supercomplexes (SCs) in the inner mitochondrial membrane with NADH-ubiquinone oxidoreductase (complex I, CI) and ubiquinol-cytochrome c oxidoreductase (cytochrome b-c1 complex, complex III, CIII), resulting in different assemblies (supercomplex SCI(1)III(2)IV(1) and megacomplex MCI(2)III(2)IV(2)).

It is found in the mitochondrion inner membrane. The enzyme catalyses 4 Fe(II)-[cytochrome c] + O2 + 8 H(+)(in) = 4 Fe(III)-[cytochrome c] + 2 H2O + 4 H(+)(out). In terms of biological role, component of the cytochrome c oxidase, the last enzyme in the mitochondrial electron transport chain which drives oxidative phosphorylation. The respiratory chain contains 3 multisubunit complexes succinate dehydrogenase (complex II, CII), ubiquinol-cytochrome c oxidoreductase (cytochrome b-c1 complex, complex III, CIII) and cytochrome c oxidase (complex IV, CIV), that cooperate to transfer electrons derived from NADH and succinate to molecular oxygen, creating an electrochemical gradient over the inner membrane that drives transmembrane transport and the ATP synthase. Cytochrome c oxidase is the component of the respiratory chain that catalyzes the reduction of oxygen to water. Electrons originating from reduced cytochrome c in the intermembrane space (IMS) are transferred via the dinuclear copper A center (CU(A)) of subunit 2 and heme A of subunit 1 to the active site in subunit 1, a binuclear center (BNC) formed by heme A3 and copper B (CU(B)). The BNC reduces molecular oxygen to 2 water molecules using 4 electrons from cytochrome c in the IMS and 4 protons from the mitochondrial matrix. This Danio rerio (Zebrafish) protein is Cytochrome c oxidase subunit 3 (mt-co3).